Consider the following 137-residue polypeptide: Phospholipase A2 group V (137 aa).

A signal peptide spans 1–20 (MKGLLTLAWFLACSVPAVPG). Cystine bridges form between C46-C137, C48-C64, C63-C117, C70-C110, C79-C103, and C97-C108. 3 residues coordinate Ca(2+): Y47, G49, and G51. The active site involves H67. D68 contacts Ca(2+). D111 is a catalytic residue.

This sequence belongs to the phospholipase A2 family. Requires Ca(2+) as cofactor. Post-translationally, this enzyme lacks one of the seven disulfide bonds found in similar PA2 proteins. As to expression, expressed in peritoneal macrophages (at protein level). Expressed in heart, skeletal muscle and white adipose tissue.

It localises to the secreted. The protein localises to the cell membrane. The protein resides in the cytoplasmic vesicle. Its subcellular location is the phagosome. It is found in the recycling endosome. It localises to the golgi apparatus. The protein localises to the cis-Golgi network. The protein resides in the trans-Golgi network. It carries out the reaction a 1,2-diacyl-sn-glycero-3-phosphocholine + H2O = a 1-acyl-sn-glycero-3-phosphocholine + a fatty acid + H(+). The catalysed reaction is 1-hexadecanoyl-2-(9Z-octadecenoyl)-sn-glycero-3-phosphocholine + H2O = 1-hexadecanoyl-sn-glycero-3-phosphocholine + (9Z)-octadecenoate + H(+). The enzyme catalyses 1-hexadecanoyl-2-(5Z,8Z,11Z,14Z-eicosatetraenoyl)-sn-glycero-3-phosphocholine + H2O = 1-hexadecanoyl-sn-glycero-3-phosphocholine + (5Z,8Z,11Z,14Z)-eicosatetraenoate + H(+). It catalyses the reaction 1-hexadecanoyl-2-(9Z,12Z-octadecadienoyl)-sn-glycero-3-phosphoethanolamine + H2O = 1-hexadecanoyl-sn-glycero-3-phosphoethanolamine + (9Z,12Z)-octadecadienoate + H(+). It carries out the reaction 1-hexadecanoyl-2-(5Z,8Z,11Z,14Z-eicosatetraenoyl)-sn-glycero-3-phosphoethanolamine + H2O = 1-hexadecanoyl-sn-glycero-3-phosphoethanolamine + (5Z,8Z,11Z,14Z)-eicosatetraenoate + H(+). The catalysed reaction is 1-octadecanoyl-2-(5Z,8Z,11Z,14Z-eicosatetraenoyl)-sn-glycero-3-phospho-(1D-myo-inositol) + H2O = 1-octadecanoyl-sn-glycero-3-phospho-(1D-myo-inositol) + (5Z,8Z,11Z,14Z)-eicosatetraenoate + H(+). The enzyme catalyses 1-hexadecanoyl-2-(9Z-octadecenoyl)-sn-glycero-3-phosphoglycerol + H2O = 1-hexadecanoyl-sn-glycero-3-phosphoglycerol + (9Z)-octadecenoate + H(+). It catalyses the reaction N-hexadecanoyl-1,2-di-(9Z-octadecenoyl)-sn-glycero-3-phosphoethanolamine + H2O = N-hexadecanoyl-1-(9Z-octadecenoyl)-sn-glycero-3-phosphoethanolamine + (9Z)-octadecenoate + H(+). It carries out the reaction 1'-[1,2-di-(9Z-octadecenoyl)-sn-glycero-3-phospho]-3'-[1-(9Z-octadecenoyl)-sn-glycero-3-phospho]-glycerol + H2O = 1',3'-bis-[1-(9Z-octadecenoyl)-sn-glycero-3-phospho]-glycerol + (9Z)-octadecenoate + H(+). The catalysed reaction is 1',3'-bis[1,2-di-(9Z-octadecenoyl)-sn-glycero-3-phospho]-glycerol + H2O = 1'-[1,2-di-(9Z-octadecenoyl)-sn-glycero-3-phospho]-3'-[1-(9Z-octadecenoyl)-sn-glycero-3-phospho]-glycerol + (9Z)-octadecenoate + H(+). It functions in the pathway lipid metabolism; phospholipid metabolism. Its pathway is lipid metabolism; leukotriene B4 biosynthesis. It participates in lipid metabolism; leukotriene C4 biosynthesis. Secretory calcium-dependent phospholipase A2 that primarily targets extracellular phospholipids. Hydrolyzes the ester bond of the fatty acyl group attached at sn-2 position of phospholipids (phospholipase A2 activity), preferentially releasing fatty acyl groups with a low degree of unsaturation such as oleoyl (C18:1) and linoleoyl (C18:2) groups. Hydrolyzes low-density lipoprotein (LDL) phospholipids releasing unsaturated fatty acids that drive macrophage polarization toward an M2 phenotype. May act in an autocrine and paracrine manner. Contributes to lipid remodeling of cellular membranes at different subcellular locations and generation of lipid mediators involved in pathogen clearance. Cleaves sn-2 fatty acyl chains of cardiolipin, a major component of the inner membrane of mitochondria and bacterial membranes. Promotes phagocytosis of bacteria in macrophages through production of lysophosphatidylethanolamines. Displays bactericidal activity against Gram-positive bacteria by directly hydrolyzing the phospholipids of the bacterial membrane. Promotes phagocytosis and killing of ingested fungi likely through controlling phagosome-lysosome fusion and phagosome maturation. Plays a role in biosynthesis of cysteinyl leukotrienes (CysLTs) in myeloid cells. In eosinophils, triggers perinuclear arachidonate release and LTC4 synthesis in a PLA2G4A-independent way. In neutrophils, amplifies CysLTs biosynthesis initiated by PLA2G4A. Promotes immune complex clearance in macrophages via stimulating synthesis of CysLTs, which act through CYSLTR1 to trigger phagocytosis. May regulate antigen processing in antigen-presenting cells. In pulmonary macrophages regulates IL33 production required for activation of group 2 innate lymphoid cells. May play a role in the biosynthesis of N-acyl ethanolamines that regulate energy metabolism. Hydrolyzes N-acyl phosphatidylethanolamines to N-acyl lysophosphatidylethanolamines, which are further cleaved by a lysophospholipase D to release N-acyl ethanolamines. The chain is Phospholipase A2 group V (Pla2g5) from Mus musculus (Mouse).